The following is a 184-amino-acid chain: UPF0149 protein PSPA7_5968 (184 aa).

It belongs to the UPF0149 family.

The chain is UPF0149 protein PSPA7_5968 from Pseudomonas paraeruginosa (strain DSM 24068 / PA7) (Pseudomonas aeruginosa (strain PA7)).